Reading from the N-terminus, the 176-residue chain is Crossover junction endodeoxyribonuclease RuvC (176 aa).

Residues aspartate 12, glutamate 72, and aspartate 144 contribute to the active site. Mg(2+) is bound by residues aspartate 12, glutamate 72, and aspartate 144.

This sequence belongs to the RuvC family. As to quaternary structure, homodimer which binds Holliday junction (HJ) DNA. The HJ becomes 2-fold symmetrical on binding to RuvC with unstacked arms; it has a different conformation from HJ DNA in complex with RuvA. In the full resolvosome a probable DNA-RuvA(4)-RuvB(12)-RuvC(2) complex forms which resolves the HJ. Mg(2+) serves as cofactor.

Its subcellular location is the cytoplasm. The catalysed reaction is Endonucleolytic cleavage at a junction such as a reciprocal single-stranded crossover between two homologous DNA duplexes (Holliday junction).. Functionally, the RuvA-RuvB-RuvC complex processes Holliday junction (HJ) DNA during genetic recombination and DNA repair. Endonuclease that resolves HJ intermediates. Cleaves cruciform DNA by making single-stranded nicks across the HJ at symmetrical positions within the homologous arms, yielding a 5'-phosphate and a 3'-hydroxyl group; requires a central core of homology in the junction. The consensus cleavage sequence is 5'-(A/T)TT(C/G)-3'. Cleavage occurs on the 3'-side of the TT dinucleotide at the point of strand exchange. HJ branch migration catalyzed by RuvA-RuvB allows RuvC to scan DNA until it finds its consensus sequence, where it cleaves and resolves the cruciform DNA. This is Crossover junction endodeoxyribonuclease RuvC from Methylocella silvestris (strain DSM 15510 / CIP 108128 / LMG 27833 / NCIMB 13906 / BL2).